The chain runs to 272 residues: Cholesterol 25-hydroxylase (272 aa).

The N-linked (GlcNAc...) asparagine glycan is linked to Asn5. Helical transmembrane passes span 38 to 58, 84 to 104, and 121 to 141; these read FFPV…FVVL, LLPC…PVTL, and LLLL…EFFV. Residues 129 to 263 form the Fatty acid hydroxylase domain; that stretch reads LFCLLLFDME…FTHWDKILGT (135 aa). Residues 142–146 carry the Histidine box-1 motif; the sequence is WHLLH. Residues 157–161 carry the Histidine box-2 motif; the sequence is HKVHH. 2 N-linked (GlcNAc...) asparagine glycosylation sites follow: Asn163 and Asn189. The short motif at 238-244 is the Histidine box-3 element; that stretch reads HHDLHHS.

This sequence belongs to the sterol desaturase family. Fe cation serves as cofactor. N-glycosylated.

Its subcellular location is the endoplasmic reticulum membrane. It carries out the reaction cholesterol + AH2 + O2 = 25-hydroxycholesterol + A + H2O. It catalyses the reaction cholesterol + NADPH + O2 + H(+) = 25-hydroxycholesterol + NADP(+) + H2O. Functionally, catalyzes the formation of 25-hydroxycholesterol from cholesterol, leading to repress cholesterol biosynthetic enzymes. Plays a key role in cell positioning and movement in lymphoid tissues: 25-hydroxycholesterol is an intermediate in biosynthesis of 7-alpha,25-dihydroxycholesterol (7-alpha,25-OHC), an oxysterol that acts as a ligand for the G protein-coupled receptor GPR183/EBI2, a chemotactic receptor for a number of lymphoid cells. May play an important role in regulating lipid metabolism by synthesizing a corepressor that blocks sterol regulatory element binding protein (SREBP) processing. As an interferon-stimulated gene, has broad antiviral activities against a wide range of enveloped viruses, such as vesicular stomatitis virus (VSV) and SARS coronavirus-2 (SARS-CoV-2). Its product, 25-hydroxycholesterol, activates the ER-localized enzyme ACAT to induce internalization of accessible cholesterol on the plasma membrane and restricts SARS-CoV-2 S protein-mediated fusion which inhibits virus replication. In testis, production of 25-hydroxycholesterol by macrophages plays a role in Leydig cell differentiation. Required to restrain inflammation in macrophages: production of 25-hydroxycholesterol protects macrophages from cholesterol overload, thereby preventing mitochondrial DNA release and subsequent activation of the AIM2 inflammasome. This chain is Cholesterol 25-hydroxylase, found in Homo sapiens (Human).